The sequence spans 279 residues: Armadillo repeat-containing protein 1 (279 aa).

Residues 36–78 form an ARM repeat; sequence GCLPGLILFLDHPSPPVVHSALLALRYLAECRANREKMKGELG. Positions 236 to 257 are disordered; sequence EYLPEDESPSKEQDKAVSRVGS. Residues 243 to 252 are compositionally biased toward basic and acidic residues; the sequence is SPSKEQDKAV.

As to quaternary structure, interacts with mitochondrial contact site and cristae organizing system (MICOS) complex components IMMT/MIC60 and MICOS10/MIC10. Interacts with mitochondrial outer membrane sorting assembly machinery (SAM) complex components SAMM50 and MTX1.

It is found in the cytoplasm. It localises to the mitochondrion. The protein localises to the mitochondrion outer membrane. In terms of biological role, in association with mitochondrial contact site and cristae organizing system (MICOS) complex components and mitochondrial outer membrane sorting assembly machinery (SAM) complex components may regulate mitochondrial dynamics playing a role in determining mitochondrial length, distribution and motility. This Gallus gallus (Chicken) protein is Armadillo repeat-containing protein 1 (ARMC1).